The sequence spans 577 residues: Arginine--tRNA ligase (577 aa).

The 'HIGH' region motif lies at 122-132; it reads PNVAKEMHVGH.

The protein belongs to the class-I aminoacyl-tRNA synthetase family. As to quaternary structure, monomer.

The protein resides in the cytoplasm. The catalysed reaction is tRNA(Arg) + L-arginine + ATP = L-arginyl-tRNA(Arg) + AMP + diphosphate. The chain is Arginine--tRNA ligase from Enterobacter sp. (strain 638).